Reading from the N-terminus, the 511-residue chain is 2,3-bisphosphoglycerate-independent phosphoglycerate mutase (511 aa).

2 residues coordinate Mn(2+): D12 and S62. S62 functions as the Phosphoserine intermediate in the catalytic mechanism. Residues H123, 153 to 154, R185, R191, 260 to 263, and K333 each bind substrate; these read RD and RPDR. Mn(2+) contacts are provided by D400, H404, D441, H442, and H460.

The protein belongs to the BPG-independent phosphoglycerate mutase family. In terms of assembly, monomer. It depends on Mn(2+) as a cofactor.

It catalyses the reaction (2R)-2-phosphoglycerate = (2R)-3-phosphoglycerate. The protein operates within carbohydrate degradation; glycolysis; pyruvate from D-glyceraldehyde 3-phosphate: step 3/5. Catalyzes the interconversion of 2-phosphoglycerate and 3-phosphoglycerate. The sequence is that of 2,3-bisphosphoglycerate-independent phosphoglycerate mutase from Clostridium novyi (strain NT).